The primary structure comprises 427 residues: Serine hydroxymethyltransferase (427 aa).

(6S)-5,6,7,8-tetrahydrofolate contacts are provided by residues leucine 124 and 128 to 130 (GHL). N6-(pyridoxal phosphate)lysine is present on lysine 233.

This sequence belongs to the SHMT family. In terms of assembly, homodimer. It depends on pyridoxal 5'-phosphate as a cofactor.

Its subcellular location is the cytoplasm. The catalysed reaction is (6R)-5,10-methylene-5,6,7,8-tetrahydrofolate + glycine + H2O = (6S)-5,6,7,8-tetrahydrofolate + L-serine. It participates in one-carbon metabolism; tetrahydrofolate interconversion. Its pathway is amino-acid biosynthesis; glycine biosynthesis; glycine from L-serine: step 1/1. Catalyzes the reversible interconversion of serine and glycine with tetrahydrofolate (THF) serving as the one-carbon carrier. This reaction serves as the major source of one-carbon groups required for the biosynthesis of purines, thymidylate, methionine, and other important biomolecules. Also exhibits THF-independent aldolase activity toward beta-hydroxyamino acids, producing glycine and aldehydes, via a retro-aldol mechanism. The protein is Serine hydroxymethyltransferase of Acidothermus cellulolyticus (strain ATCC 43068 / DSM 8971 / 11B).